The primary structure comprises 209 residues: Translation initiation factor IF-3 (209 aa).

Belongs to the IF-3 family. Monomer.

The protein localises to the cytoplasm. In terms of biological role, IF-3 binds to the 30S ribosomal subunit and shifts the equilibrium between 70S ribosomes and their 50S and 30S subunits in favor of the free subunits, thus enhancing the availability of 30S subunits on which protein synthesis initiation begins. The sequence is that of Translation initiation factor IF-3 from Chlorobium phaeovibrioides (strain DSM 265 / 1930) (Prosthecochloris vibrioformis (strain DSM 265)).